The following is a 499-amino-acid chain: Maturase K (499 aa).

Belongs to the intron maturase 2 family. MatK subfamily.

The protein localises to the plastid. It localises to the chloroplast. In terms of biological role, usually encoded in the trnK tRNA gene intron. Probably assists in splicing its own and other chloroplast group II introns. This chain is Maturase K, found in Ceratonia siliqua (Carob).